The primary structure comprises 488 residues: Ribulose bisphosphate carboxylase large chain 2 (488 aa).

The substrate site is built by asparagine 128 and threonine 178. The Proton acceptor role is filled by lysine 180. Lysine 182 contacts substrate. 3 residues coordinate Mg(2+): lysine 206, aspartate 208, and glutamate 209. Lysine 206 is subject to N6-carboxylysine. The Proton acceptor role is filled by histidine 298. Substrate is bound by residues arginine 299, histidine 331, and serine 383.

It belongs to the RuBisCO large chain family. Type I subfamily. Heterohexadecamer of 8 large chains and 8 small chains. Requires Mg(2+) as cofactor.

The catalysed reaction is 2 (2R)-3-phosphoglycerate + 2 H(+) = D-ribulose 1,5-bisphosphate + CO2 + H2O. The enzyme catalyses D-ribulose 1,5-bisphosphate + O2 = 2-phosphoglycolate + (2R)-3-phosphoglycerate + 2 H(+). Its function is as follows. RuBisCO catalyzes two reactions: the carboxylation of D-ribulose 1,5-bisphosphate, the primary event in carbon dioxide fixation, as well as the oxidative fragmentation of the pentose substrate. Both reactions occur simultaneously and in competition at the same active site. The sequence is that of Ribulose bisphosphate carboxylase large chain 2 from Nitrobacter hamburgensis (strain DSM 10229 / NCIMB 13809 / X14).